Consider the following 349-residue polypeptide: Oxygen-dependent coproporphyrinogen-III oxidase (349 aa).

2 disordered regions span residues Met1–Arg21 and Ser37–Lys60. Residue Ser105 participates in substrate binding. The a divalent metal cation site is built by His109 and His119. His119 functions as the Proton donor in the catalytic mechanism. Asn121–Arg123 is a substrate binding site. Residues His153 and His183 each coordinate a divalent metal cation. The interval Tyr273 to Glu308 is important for dimerization.

Belongs to the aerobic coproporphyrinogen-III oxidase family. As to quaternary structure, homodimer. Requires a divalent metal cation as cofactor.

Its subcellular location is the cytoplasm. The catalysed reaction is coproporphyrinogen III + O2 + 2 H(+) = protoporphyrinogen IX + 2 CO2 + 2 H2O. It functions in the pathway porphyrin-containing compound metabolism; protoporphyrin-IX biosynthesis; protoporphyrinogen-IX from coproporphyrinogen-III (O2 route): step 1/1. Its function is as follows. Involved in the heme and chlorophyll biosynthesis. Catalyzes the aerobic oxidative decarboxylation of propionate groups of rings A and B of coproporphyrinogen-III to yield the vinyl groups in protoporphyrinogen-IX. This Prochlorococcus marinus (strain MIT 9313) protein is Oxygen-dependent coproporphyrinogen-III oxidase.